The chain runs to 461 residues: Porin AaxA (461 aa).

Positions 1-22 (MSFRSVLLTALLSLSFTTTMQA) are cleaved as a signal peptide.

It belongs to the OprB family.

The protein localises to the cell outer membrane. Functionally, facilitates L-arginine uptake, as part of the AaxABC system. The arginine uptake by the bacterium in the macrophage may be a virulence factor against the host innate immune response. This chain is Porin AaxA (aaxA), found in Chlamydia trachomatis serovar D (strain ATCC VR-885 / DSM 19411 / UW-3/Cx).